Consider the following 262-residue polypeptide: Ribosomal RNA small subunit methyltransferase G (262 aa).

S-adenosyl-L-methionine contacts are provided by glycine 72, leucine 77, and arginine 142. The disordered stretch occupies residues 212–262; the sequence is RSSQLSRAEGRKGRGDGERHDGRQVRRTARDSRRSREVDRDQPTRGQSRST. Residues 219–254 are compositionally biased toward basic and acidic residues; the sequence is AEGRKGRGDGERHDGRQVRRTARDSRRSREVDRDQP.

This sequence belongs to the methyltransferase superfamily. RNA methyltransferase RsmG family.

It localises to the cytoplasm. Specifically methylates the N7 position of guanine in position 518 of 16S rRNA. The protein is Ribosomal RNA small subunit methyltransferase G of Frankia alni (strain DSM 45986 / CECT 9034 / ACN14a).